Here is a 306-residue protein sequence, read N- to C-terminus: Methionyl-tRNA formyltransferase (306 aa).

(6S)-5,6,7,8-tetrahydrofolate is bound at residue 109-112 (SILP).

The protein belongs to the Fmt family.

It catalyses the reaction L-methionyl-tRNA(fMet) + (6R)-10-formyltetrahydrofolate = N-formyl-L-methionyl-tRNA(fMet) + (6S)-5,6,7,8-tetrahydrofolate + H(+). Functionally, attaches a formyl group to the free amino group of methionyl-tRNA(fMet). The formyl group appears to play a dual role in the initiator identity of N-formylmethionyl-tRNA by promoting its recognition by IF2 and preventing the misappropriation of this tRNA by the elongation apparatus. The protein is Methionyl-tRNA formyltransferase of Sphingopyxis alaskensis (strain DSM 13593 / LMG 18877 / RB2256) (Sphingomonas alaskensis).